A 1338-amino-acid polypeptide reads, in one-letter code: Phosphoribosylformylglycinamidine synthase (1338 aa).

Ser215 bears the Phosphoserine mark. ATP contacts are provided by residues 322 to 333 (GATTGTGGRIRD) and 402 to 404 (AGF). Ser569 is modified (phosphoserine). Phosphothreonine occurs at positions 619 and 623. ATP is bound at residue Ala706. 4 residues coordinate Mg(2+): Asp707, Glu746, Asn750, and Asp909. Ser911 contributes to the ATP binding site. The region spanning 1064–1302 (RVAILREEGS…AVMPHPERAV (239 aa)) is the Glutamine amidotransferase type-1 domain. Residue Cys1158 is the Nucleophile of the active site. Residues His1297 and Glu1299 contribute to the active site.

In the N-terminal section; belongs to the FGAMS family.

Its subcellular location is the cytoplasm. The catalysed reaction is N(2)-formyl-N(1)-(5-phospho-beta-D-ribosyl)glycinamide + L-glutamine + ATP + H2O = 2-formamido-N(1)-(5-O-phospho-beta-D-ribosyl)acetamidine + L-glutamate + ADP + phosphate + H(+). It participates in purine metabolism; IMP biosynthesis via de novo pathway; 5-amino-1-(5-phospho-D-ribosyl)imidazole from N(2)-formyl-N(1)-(5-phospho-D-ribosyl)glycinamide: step 1/2. Its function is as follows. Phosphoribosylformylglycinamidine synthase involved in the purines biosynthetic pathway. Catalyzes the ATP-dependent conversion of formylglycinamide ribonucleotide (FGAR) and glutamine to yield formylglycinamidine ribonucleotide (FGAM) and glutamate. This Homo sapiens (Human) protein is Phosphoribosylformylglycinamidine synthase (PFAS).